We begin with the raw amino-acid sequence, 410 residues long: Divergent protein kinase domain 1A (410 aa).

Residues 1–5 are Cytoplasmic-facing; sequence MARLS. The helical transmembrane segment at 6-26 threads the bilayer; that stretch reads YVRIKYLFFSWLAVFIGSWVI. The Lumenal portion of the chain corresponds to 27–410; it reads YVRYNSYTEL…WKKISHTNDS (384 aa).

It belongs to the DIPK family. Among the many cysteines in the lumenal domain, most are probably involved in disulfide bonds.

Its subcellular location is the endoplasmic reticulum membrane. The chain is Divergent protein kinase domain 1A (dipk1a) from Xenopus laevis (African clawed frog).